The primary structure comprises 182 residues: Ribulose bisphosphate carboxylase small subunit, chloroplastic (182 aa).

A chloroplast-targeting transit peptide spans 1-58 (MASSMISSATIATVNCSSPAQANMVAPFTGLKSASAFPVTRKANNDITSLASNGGRVQ).

The protein belongs to the RuBisCO small chain family. As to quaternary structure, heterohexadecamer of 8 large and 8 small subunits.

It localises to the plastid. The protein resides in the chloroplast. In terms of biological role, ruBisCO catalyzes two reactions: the carboxylation of D-ribulose 1,5-bisphosphate, the primary event in carbon dioxide fixation, as well as the oxidative fragmentation of the pentose substrate. Both reactions occur simultaneously and in competition at the same active site. Although the small subunit is not catalytic it is essential for maximal activity. This Gossypium hirsutum (Upland cotton) protein is Ribulose bisphosphate carboxylase small subunit, chloroplastic.